Reading from the N-terminus, the 120-residue chain is Large ribosomal subunit protein bL20 (120 aa).

It belongs to the bacterial ribosomal protein bL20 family.

Functionally, binds directly to 23S ribosomal RNA and is necessary for the in vitro assembly process of the 50S ribosomal subunit. It is not involved in the protein synthesizing functions of that subunit. This Methylacidiphilum infernorum (isolate V4) (Methylokorus infernorum (strain V4)) protein is Large ribosomal subunit protein bL20.